A 252-amino-acid polypeptide reads, in one-letter code: Cilia- and flagella-associated protein 300 (252 aa).

Belongs to the CFAP300 family.

The protein resides in the cytoplasm. The protein localises to the cytoskeleton. It localises to the cilium axoneme. Its function is as follows. Cilium- and flagellum-specific protein that plays a role in axonemal structure organization and motility. Plays a role in outer and inner axonemal dynein arm assembly. The sequence is that of Cilia- and flagella-associated protein 300 from Paramecium tetraurelia.